We begin with the raw amino-acid sequence, 297 residues long: Phosphatidylinositol N-acetylglucosaminyltransferase subunit C (297 aa).

A run of 4 helical transmembrane segments spans residues 67–87 (VFVVIWWYMDEGLLAPQWLFG), 88–108 (TGLASSLIGYVLFDFIDGGEG), 153–173 (AVFMLLGHLIFFDYGANAAIV), and 239–259 (ALGGLLSISAVGAILFALLLI).

The protein belongs to the PIGC family. In terms of assembly, component of the glycosylphosphatidylinositol-N-acetylglucosaminyltransferase (GPI-GnT) complex composed at least by PIGA, PIGC, PIGH, PIGP, PIGQ, PIGY and DPM2. Interacts with PIGQ. Interacts with the heterodimer PIGA:PIGH.

The protein localises to the endoplasmic reticulum membrane. The protein operates within glycolipid biosynthesis; glycosylphosphatidylinositol-anchor biosynthesis. Functionally, part of the glycosylphosphatidylinositol-N-acetylglucosaminyltransferase (GPI-GnT) complex that catalyzes the transfer of N-acetylglucosamine from UDP-N-acetylglucosamine to phosphatidylinositol and participates in the first step of GPI biosynthesis. The protein is Phosphatidylinositol N-acetylglucosaminyltransferase subunit C of Bos taurus (Bovine).